Here is a 500-residue protein sequence, read N- to C-terminus: Glycerol kinase (500 aa).

An ADP-binding site is contributed by threonine 11. 3 residues coordinate ATP: threonine 11, threonine 12, and serine 13. Threonine 11 serves as a coordination point for sn-glycerol 3-phosphate. Arginine 15 provides a ligand contact to ADP. The sn-glycerol 3-phosphate site is built by arginine 81, glutamate 82, tyrosine 133, and aspartate 242. Positions 81, 82, 133, 242, and 243 each coordinate glycerol. Residues threonine 264 and glycine 307 each contribute to the ADP site. Residues threonine 264, glycine 307, glutamine 311, and glycine 411 each contribute to the ATP site. Glycine 411 lines the ADP pocket.

Belongs to the FGGY kinase family.

The enzyme catalyses glycerol + ATP = sn-glycerol 3-phosphate + ADP + H(+). It participates in polyol metabolism; glycerol degradation via glycerol kinase pathway; sn-glycerol 3-phosphate from glycerol: step 1/1. Inhibited by fructose 1,6-bisphosphate (FBP). Its function is as follows. Key enzyme in the regulation of glycerol uptake and metabolism. Catalyzes the phosphorylation of glycerol to yield sn-glycerol 3-phosphate. This chain is Glycerol kinase, found in Bradyrhizobium sp. (strain BTAi1 / ATCC BAA-1182).